Here is a 327-residue protein sequence, read N- to C-terminus: Meiotic coiled-coil protein 6 (327 aa).

Residues 66 to 188 are a coiled coil; sequence DAFERDSTQR…TETKEMNKIK (123 aa). Residues 175–199 show a composition bias toward basic and acidic residues; the sequence is RRMETETKEMNKIKPKNDSESDRFK. A disordered region spans residues 175-234; it reads RRMETETKEMNKIKPKNDSESDRFKRNSQSLSQQSPLLDVHSPDNSNHRTMLNINNSSPI. Residues 202-212 are compositionally biased toward low complexity; it reads SQSLSQQSPLL. Residues 217–232 show a composition bias toward polar residues; the sequence is PDNSNHRTMLNINNSS. A coiled-coil region spans residues 243–297; sequence NEVKNRISRLQKTFADLENQHHSFQQICQTLRKRLENDSSTTKQRLSKLEEIIRN.

Interacts with alp4, kms1 and mbo1.

The protein resides in the nucleus. It localises to the cytoplasm. Its subcellular location is the cytoskeleton. The protein localises to the microtubule organizing center. It is found in the spindle pole body. Has a role in meiotic nuclear oscillation and recombination. Required to remodel astral microtubules into the 'horsetail' astral array maintaining the 'horsetail' nuclear movement. Promotes homologous paring of chromosomes during this movement. In Schizosaccharomyces pombe (strain 972 / ATCC 24843) (Fission yeast), this protein is Meiotic coiled-coil protein 6 (mcp6).